Here is a 678-residue protein sequence, read N- to C-terminus: Exoribonuclease 2 (678 aa).

An RNB domain is found at 193–521 (REDLTALPFV…INHRLLKAHI (329 aa)). The region spanning 568 to 650 (ETRFQAEIFD…ENRSLVGKPT (83 aa)) is the S1 motif domain. The segment at 658 to 678 (SETQTSTEQPAEGAENNEPQA) is disordered.

Belongs to the RNR ribonuclease family. RNase II subfamily.

It localises to the cytoplasm. The catalysed reaction is Exonucleolytic cleavage in the 3'- to 5'-direction to yield nucleoside 5'-phosphates.. Functionally, involved in mRNA degradation. Hydrolyzes single-stranded polyribonucleotides processively in the 3' to 5' direction. The chain is Exoribonuclease 2 from Vibrio cholerae serotype O1 (strain ATCC 39541 / Classical Ogawa 395 / O395).